We begin with the raw amino-acid sequence, 209 residues long: Thiamine-phosphate synthase (209 aa).

Residues 32-36 (QLRMK) and aspartate 64 contribute to the 4-amino-2-methyl-5-(diphosphooxymethyl)pyrimidine site. Residues aspartate 65 and aspartate 84 each coordinate Mg(2+). Threonine 103 is a 4-amino-2-methyl-5-(diphosphooxymethyl)pyrimidine binding site. 129–131 (TTT) lines the 2-[(2R,5Z)-2-carboxy-4-methylthiazol-5(2H)-ylidene]ethyl phosphate pocket. Lysine 132 lines the 4-amino-2-methyl-5-(diphosphooxymethyl)pyrimidine pocket. Residue glycine 165 coordinates 2-[(2R,5Z)-2-carboxy-4-methylthiazol-5(2H)-ylidene]ethyl phosphate.

This sequence belongs to the thiamine-phosphate synthase family. The cofactor is Mg(2+).

The catalysed reaction is 2-[(2R,5Z)-2-carboxy-4-methylthiazol-5(2H)-ylidene]ethyl phosphate + 4-amino-2-methyl-5-(diphosphooxymethyl)pyrimidine + 2 H(+) = thiamine phosphate + CO2 + diphosphate. It carries out the reaction 2-(2-carboxy-4-methylthiazol-5-yl)ethyl phosphate + 4-amino-2-methyl-5-(diphosphooxymethyl)pyrimidine + 2 H(+) = thiamine phosphate + CO2 + diphosphate. The enzyme catalyses 4-methyl-5-(2-phosphooxyethyl)-thiazole + 4-amino-2-methyl-5-(diphosphooxymethyl)pyrimidine + H(+) = thiamine phosphate + diphosphate. Its pathway is cofactor biosynthesis; thiamine diphosphate biosynthesis; thiamine phosphate from 4-amino-2-methyl-5-diphosphomethylpyrimidine and 4-methyl-5-(2-phosphoethyl)-thiazole: step 1/1. Functionally, condenses 4-methyl-5-(beta-hydroxyethyl)thiazole monophosphate (THZ-P) and 2-methyl-4-amino-5-hydroxymethyl pyrimidine pyrophosphate (HMP-PP) to form thiamine monophosphate (TMP). The protein is Thiamine-phosphate synthase of Bacteroides thetaiotaomicron (strain ATCC 29148 / DSM 2079 / JCM 5827 / CCUG 10774 / NCTC 10582 / VPI-5482 / E50).